The following is a 105-amino-acid chain: MANWDGKYISPYAEHGKKSEQVKKITVSIPIKVLEILTNERTRRQLKSLRHATNSELLCEAFLHAFTGQPLPTDADLMKERNDEIPEDAKVLMRELGVDPESWEY.

This sequence belongs to the MetJ family. As to quaternary structure, homodimer.

It localises to the cytoplasm. Functionally, this regulatory protein, when combined with SAM (S-adenosylmethionine) represses the expression of the methionine regulon and of enzymes involved in SAM synthesis. This chain is Met repressor, found in Haemophilus influenzae (strain PittEE).